The primary structure comprises 110 residues: Ribonuclease P protein component 4 (110 aa).

Residues Cys65, Cys68, Cys94, and Cys97 each coordinate Zn(2+).

It belongs to the eukaryotic/archaeal RNase P protein component 4 family. Consists of a catalytic RNA component and at least 5 protein subunits. Zn(2+) is required as a cofactor.

The protein localises to the cytoplasm. The catalysed reaction is Endonucleolytic cleavage of RNA, removing 5'-extranucleotides from tRNA precursor.. Its function is as follows. Part of ribonuclease P, a protein complex that generates mature tRNA molecules by cleaving their 5'-ends. This Methanococcus maripaludis (strain DSM 14266 / JCM 13030 / NBRC 101832 / S2 / LL) protein is Ribonuclease P protein component 4.